A 207-amino-acid polypeptide reads, in one-letter code: Outer-membrane lipoprotein LolB (207 aa).

An N-terminal signal peptide occupies residues 1-21; that stretch reads MPLPDFRLIRLLPLAALVLTA. Residue Cys-22 is the site of N-palmitoyl cysteine attachment. A lipid anchor (S-diacylglycerol cysteine) is attached at Cys-22.

The protein belongs to the LolB family. Monomer.

The protein localises to the cell outer membrane. Plays a critical role in the incorporation of lipoproteins in the outer membrane after they are released by the LolA protein. This chain is Outer-membrane lipoprotein LolB, found in Escherichia coli (strain K12 / MC4100 / BW2952).